Reading from the N-terminus, the 322-residue chain is Ethylmalonyl-CoA decarboxylase (322 aa).

Lys232 is modified (N6-acetyllysine; alternate). Lys232 is modified (N6-succinyllysine; alternate). Lys316 carries the N6-succinyllysine modification.

This sequence belongs to the enoyl-CoA hydratase/isomerase family.

The protein resides in the cytoplasm. The protein localises to the cytosol. The catalysed reaction is (2S)-ethylmalonyl-CoA + H(+) = butanoyl-CoA + CO2. It catalyses the reaction (S)-methylmalonyl-CoA + H(+) = propanoyl-CoA + CO2. The enzyme catalyses (2R)-ethylmalonyl-CoA + H(+) = butanoyl-CoA + CO2. Functionally, decarboxylates ethylmalonyl-CoA, a potentially toxic metabolite, to form butyryl-CoA, suggesting it might be involved in metabolite proofreading. Acts preferentially on (S)-ethylmalonyl-CoA but also has some activity on the (R)-isomer. Also has methylmalonyl-CoA decarboxylase activity at lower level. The chain is Ethylmalonyl-CoA decarboxylase (Echdc1) from Mus musculus (Mouse).